We begin with the raw amino-acid sequence, 526 residues long: Glucomannan 4-beta-mannosyltransferase 1 (526 aa).

Residues 31–51 traverse the membrane as a helical segment; that stretch reads VIIPLLKLAVIVCSVMSIMLF. Aspartate 130 is a catalytic residue. Positions 189 and 191 each coordinate substrate. Aspartate 283 is an active-site residue. Helical transmembrane passes span 362 to 382, 399 to 419, 477 to 497, and 501 to 521; these read IVAH…CVIV, ITIL…LWIL, PLEI…LLFG, and FFVY…GLVG.

This sequence belongs to the glycosyltransferase 2 family. Plant cellulose synthase-like A subfamily.

The protein resides in the golgi apparatus membrane. The enzyme catalyses GDP-mannose + (glucomannan)n = GDP + (glucomannan)n+1.. Its function is as follows. Possesses 4-beta-mannosyltransferase activity on mannan using GDP-mannose. The beta-1,4-mannan product is the backbone for galactomannan synthesis by galactomannan galactosyltransferase. The galactomannan is a hemicellulosic storage polysaccharide accumulated in the form of secondary wall thickenings in the seed endosperm. The protein is Glucomannan 4-beta-mannosyltransferase 1 of Cyamopsis tetragonoloba (Guar).